The chain runs to 626 residues: Deoxynucleoside triphosphate triphosphohydrolase SAMHD1 (626 aa).

At Met-1 the chain carries N-acetylmethionine. Over residues 1–19 (MQRADSEQPSKRPRCDDSP) the composition is skewed to basic and acidic residues. The segment at 1–36 (MQRADSEQPSKRPRCDDSPRTPSNTPSAEADWSPGL) is disordered. A Phosphoserine modification is found at Ser-18. 2 positions are modified to phosphothreonine: Thr-21 and Thr-25. Phosphoserine occurs at positions 33 and 93. The 66-residue stretch at 45–110 (WGPEQVCSFL…LSYIQRLVQI (66 aa)) folds into the SAM domain. Positions 116 and 117 each coordinate GTP. Asn-119 lines the dATP pocket. A dCTP-binding site is contributed by Asn-119. Position 119 (Asn-119) interacts with dGTP. Asn-119 serves as a coordination point for dTTP. Residues Asp-137, Gln-142, and Arg-145 each coordinate GTP. Gln-149 serves as a coordination point for dATP. Gln-149 provides a ligand contact to dCTP. DGTP contacts are provided by Gln-149, Leu-150, Val-156, and Arg-164. Gln-149 serves as a coordination point for dTTP. DATP contacts are provided by Val-156 and Arg-164. The dCTP site is built by Val-156 and Arg-164. Residues Val-156 and Arg-164 each contribute to the dTTP site. The region spanning 164–316 (RFEHSLGVGY…GIDVDKWDYF (153 aa)) is the HD domain. Mn(2+)-binding residues include His-167, His-206, and Asp-207. His-210 and His-215 together coordinate dATP. DCTP-binding residues include His-210 and His-215. His-210 and His-215 together coordinate dTTP. Residue His-233 is part of the active site. Asp-311 is a binding site for Mn(2+). Residues Lys-312, Tyr-315, Asp-319, Arg-333, Arg-352, Lys-354, Asn-358, and Arg-366 each coordinate dATP. 6 residues coordinate dCTP: Lys-312, Tyr-315, Asp-319, Arg-333, Arg-352, and Lys-354. DGTP is bound by residues Lys-312, Tyr-315, Asp-319, Arg-333, Arg-352, Lys-354, Asn-358, and Arg-366. 6 residues coordinate dTTP: Lys-312, Tyr-315, Asp-319, Arg-333, Arg-352, and Lys-354. 2 residues coordinate dCTP: Arg-366 and Arg-372. The dGTP site is built by Tyr-374, Gln-375, His-376, and Lys-377. Positions 375, 376, and 377 each coordinate dATP. DCTP contacts are provided by Gln-375, His-376, and Lys-377. Gln-375, His-376, and Lys-377 together coordinate dTTP. GTP contacts are provided by Arg-451 and Lys-455. Glycyl lysine isopeptide (Lys-Gly) (interchain with G-Cter in SUMO2) cross-links involve residues Lys-467, Lys-469, and Lys-492. Lys-523 is a binding site for GTP. Lys-523 lines the dATP pocket. DCTP is bound at residue Lys-523. Lys-523 contacts dGTP. Residue Lys-523 participates in dTTP binding. Position 592 is a (Microbial infection) Phosphothreonine (Thr-592). Position 592 is a phosphothreonine; by CDK1 (Thr-592). Lys-622 is covalently cross-linked (Glycyl lysine isopeptide (Lys-Gly) (interchain with G-Cter in SUMO2)).

Belongs to the SAMHD1 family. Homodimer; in absence of GTP and dNTP. Homotetramer; in GTP- and dNTP-bound form. Interacts with MRE11; leading to stimulate the exonuclease activity of MRE11. Interacts with RBBP8/CtIP. Interacts (via its C-terminus) with CD81. In terms of assembly, (Microbial infection) Interacts with HIV-2 viral protein Vpx; promoting interaction with a E3 ubiquitin-protein ligase complex containing DCAF1, leading to subsequent ubiquitination and degradation of SAMHD1. Requires Mn(2+) as cofactor. Post-translationally, phosphorylation at Thr-592 by CDK1 acts as a switch to control deoxynucleoside triphosphate (dNTPase)-dependent and -independent functions. Phosphorylation at Thr-592 takes place in cycling cells: it reduces the stability of the homotetramer, impairing the dNTPase activity and subsequent ability to restrict infection by viruses. It also inhibits ability to suppress LINE-1 retrotransposon activity. In contrast, phosphorylation at Thr-592 promotes DNA end resection at stalled replication forks in response to DNA damage. In terms of processing, (Microbial infection) Phosphorylation at Thr-592 by Epstein-Barr virus kinase BGLF4 and human cytomegalovirus/HCMV UL97 leads to a reduced level of dCTPase and dTTPase activity and the loss of viral restriction. (Microbial infection) Ubiquitinated following interaction with HIV-2 viral protein Vpx; Vpx promotes interaction and with a DCX (DDB1-CUL4-X-box) E3 ubiquitin ligase, leading to proteasomal degradation. As to expression, expressed in heart, skeletal muscle, spleen, liver, small intestine, placenta, lung and peripheral blood leukocytes. No expression is seen in brain and thymus.

The protein resides in the nucleus. It is found in the chromosome. It carries out the reaction a 2'-deoxyribonucleoside 5'-triphosphate + H2O = a 2'-deoxyribonucleoside + triphosphate + H(+). The catalysed reaction is dATP + H2O = 2'-deoxyadenosine + triphosphate + H(+). It catalyses the reaction dCTP + H2O = 2'-deoxycytidine + triphosphate + H(+). The enzyme catalyses dGTP + H2O = 2'-deoxyguanosine + triphosphate + H(+). It carries out the reaction dTTP + H2O = thymidine + triphosphate + H(+). Its activity is regulated as follows. Allosterically activated and regulated via the combined actions of GTP and dNTPs (dATP, dGTP, dTTP and dCTP): Allosteric site 1 binds GTP, while allosteric site 2 binds dNTP. Allosteric activation promotes the formation of highly active homotetramers. Phosphorylation at Thr-592 impairs homotetramerization, thereby inhibiting dNTPase activity, leading to reduced ability to restrict infection by viruses. In terms of biological role, protein that acts both as a host restriction factor involved in defense response to virus and as a regulator of DNA end resection at stalled replication forks. Has deoxynucleoside triphosphate (dNTPase) activity, which is required to restrict infection by viruses, such as HIV-1: dNTPase activity reduces cellular dNTP levels to levels too low for retroviral reverse transcription to occur, blocking early-stage virus replication in dendritic and other myeloid cells. Likewise, suppresses LINE-1 retrotransposon activity. Not able to restrict infection by HIV-2 virus; because restriction activity is counteracted by HIV-2 viral protein Vpx. In addition to virus restriction, dNTPase activity acts as a regulator of DNA precursor pools by regulating dNTP pools. Phosphorylation at Thr-592 acts as a switch to control dNTPase-dependent and -independent functions: it inhibits dNTPase activity and ability to restrict infection by viruses, while it promotes DNA end resection at stalled replication forks. Functions during S phase at stalled DNA replication forks to promote the resection of gapped or reversed forks: acts by stimulating the exonuclease activity of MRE11, activating the ATR-CHK1 pathway and allowing the forks to restart replication. Its ability to promote degradation of nascent DNA at stalled replication forks is required to prevent induction of type I interferons, thereby preventing chronic inflammation. Ability to promote DNA end resection at stalled replication forks is independent of dNTPase activity. Enhances immunoglobulin hypermutation in B-lymphocytes by promoting transversion mutation. The protein is Deoxynucleoside triphosphate triphosphohydrolase SAMHD1 of Homo sapiens (Human).